A 174-amino-acid chain; its full sequence is Methylated protein MJ0556 (174 aa).

2 CBS domains span residues 28–87 (MISG…YLNV) and 91–156 (MLKN…IIKE).

Methylated at an undetermined residue between Ser-2 and Asp-26.

The protein is Methylated protein MJ0556 of Methanocaldococcus jannaschii (strain ATCC 43067 / DSM 2661 / JAL-1 / JCM 10045 / NBRC 100440) (Methanococcus jannaschii).